Consider the following 428-residue polypeptide: UPF0761 membrane protein Ppha_1623 (428 aa).

6 consecutive transmembrane segments (helical) span residues leucine 52–phenylalanine 72, serine 108–valine 128, phenylalanine 148–alanine 168, leucine 189–valine 209, phenylalanine 216–serine 233, and glycine 252–leucine 272.

The protein belongs to the UPF0761 family.

The protein resides in the cell inner membrane. The chain is UPF0761 membrane protein Ppha_1623 from Pelodictyon phaeoclathratiforme (strain DSM 5477 / BU-1).